The following is a 582-amino-acid chain: Proline--tRNA ligase (582 aa).

Belongs to the class-II aminoacyl-tRNA synthetase family. ProS type 1 subfamily. As to quaternary structure, homodimer.

Its subcellular location is the cytoplasm. It carries out the reaction tRNA(Pro) + L-proline + ATP = L-prolyl-tRNA(Pro) + AMP + diphosphate. In terms of biological role, catalyzes the attachment of proline to tRNA(Pro) in a two-step reaction: proline is first activated by ATP to form Pro-AMP and then transferred to the acceptor end of tRNA(Pro). As ProRS can inadvertently accommodate and process non-cognate amino acids such as alanine and cysteine, to avoid such errors it has two additional distinct editing activities against alanine. One activity is designated as 'pretransfer' editing and involves the tRNA(Pro)-independent hydrolysis of activated Ala-AMP. The other activity is designated 'posttransfer' editing and involves deacylation of mischarged Ala-tRNA(Pro). The misacylated Cys-tRNA(Pro) is not edited by ProRS. The chain is Proline--tRNA ligase from Mycobacterium avium (strain 104).